The chain runs to 141 residues: Hemoglobin subunit alpha-2 (141 aa).

Ser1 carries the N-acetylserine modification. The region spanning Ser1–Arg141 is the Globin domain. His59 provides a ligand contact to O2. A heme b-binding site is contributed by His88.

Belongs to the globin family. In terms of assembly, hb2 is a heterotetramer of two alpha-2 chains and two beta chains. In terms of tissue distribution, red blood cells.

Its function is as follows. Involved in oxygen transport from gills to the various peripheral tissues. This Notothenia angustata (Rockcod) protein is Hemoglobin subunit alpha-2 (hba2).